We begin with the raw amino-acid sequence, 314 residues long: Olfactory receptor 5I1 (314 aa).

The Extracellular portion of the chain corresponds to Met1–Ile27. N-linked (GlcNAc...) asparagine glycosylation occurs at Asn7. A helical transmembrane segment spans residues Val28–Met48. The Cytoplasmic portion of the chain corresponds to Leu49 to His56. A helical transmembrane segment spans residues Leu57–Ser77. Topologically, residues Asp78–Leu101 are extracellular. Cys99 and Cys191 form a disulfide bridge. Residues Gln102–Tyr122 traverse the membrane as a helical segment. Topologically, residues Asp123–Gly141 are cytoplasmic. A helical transmembrane segment spans residues Ile142–Thr162. Over Ser163–Glu198 the chain is Extracellular. The chain crosses the membrane as a helical span at residues Trp199–Ser219. Residues Tyr220–Thr239 are Cytoplasmic-facing. Residues Phe240–Ile260 traverse the membrane as a helical segment. Topologically, residues Tyr261–Asp273 are extracellular. The chain crosses the membrane as a helical span at residues Lys274–Leu294. At Arg295–Ser314 the chain is on the cytoplasmic side.

This sequence belongs to the G-protein coupled receptor 1 family.

The protein localises to the cell membrane. Functionally, odorant receptor. In Homo sapiens (Human), this protein is Olfactory receptor 5I1 (OR5I1).